Reading from the N-terminus, the 174-residue chain is Small ribosomal subunit protein uS12m (174 aa).

It belongs to the universal ribosomal protein uS12 family. Component of the mitochondrial small ribosomal subunit (mt-SSU). Mature N.crassa 74S mitochondrial ribosomes consist of a small (37S) and a large (54S) subunit. The 37S small subunit contains a 16S ribosomal RNA (16S mt-rRNA) and 32 different proteins. The 54S large subunit contains a 23S rRNA (23S mt-rRNA) and 42 different proteins. uS12m forms part of the decoding center of the mt-SSU.

It is found in the mitochondrion. In terms of biological role, component of the mitochondrial ribosome (mitoribosome), a dedicated translation machinery responsible for the synthesis of mitochondrial genome-encoded proteins, including at least some of the essential transmembrane subunits of the mitochondrial respiratory chain. The mitoribosomes are attached to the mitochondrial inner membrane and translation products are cotranslationally integrated into the membrane. This chain is Small ribosomal subunit protein uS12m (mrps12), found in Neurospora crassa (strain ATCC 24698 / 74-OR23-1A / CBS 708.71 / DSM 1257 / FGSC 987).